Here is a 102-residue protein sequence, read N- to C-terminus: Protamine-2 (102 aa).

A disordered region spans residues 1 to 102 (MVRYRVRSPS…RTRRRTCRKH (102 aa)). Ser8, Ser10, and Ser37 each carry phosphoserine. Basic and acidic residues predominate over residues 39 to 48 (EHVEVYERTH). The segment covering 49–102 (GHSHYRRRHCSRRRLRRIHRQQHRSCRRRKRRSCRHRRRHRRGCRTRRRTCRKH) has biased composition (basic residues).

It belongs to the protamine P2 family. Interacts with TDRP. In terms of processing, proteolytic processing into mature chains is required for histone eviction during spermatogenesis. Transition proteins (TNP1 and TNP2) are required for processing. As to expression, testis.

It localises to the nucleus. The protein resides in the chromosome. Functionally, protamines substitute for histones in the chromatin of sperm during the haploid phase of spermatogenesis. They compact sperm DNA into a highly condensed, stable and inactive complex. The sequence is that of Protamine-2 (PRM2) from Pan paniscus (Pygmy chimpanzee).